Reading from the N-terminus, the 352-residue chain is Geranylgeranyl transferase type-1 subunit beta (352 aa).

4 PFTB repeats span residues 135–180 (VNKK…FILD), 187–228 (KESA…SLLG), 236–276 (FKEQ…MMID), and 283–325 (FASI…SFGN). Residues 213–215 (HGG) and 255–258 (RTNK) contribute to the geranylgeranyl diphosphate site. Zn(2+)-binding residues include aspartate 261 and cysteine 263. A geranylgeranyl diphosphate-binding site is contributed by 264-267 (YAFW). Histidine 313 lines the Zn(2+) pocket.

The protein belongs to the protein prenyltransferase subunit beta family. As to quaternary structure, heterodimer of an alpha and a beta subunit. The cofactor is Zn(2+). Requires Mg(2+) as cofactor.

The enzyme catalyses geranylgeranyl diphosphate + L-cysteinyl-[protein] = S-geranylgeranyl-L-cysteinyl-[protein] + diphosphate. Functionally, catalyzes the transfer of a geranyl-geranyl moiety from geranyl-geranyl pyrophosphate to a cysteine at the fourth position from the C-terminus of proteins having the C-terminal sequence Cys-aliphatic-aliphatic-X. This chain is Geranylgeranyl transferase type-1 subunit beta (pggt1b), found in Dictyostelium discoideum (Social amoeba).